We begin with the raw amino-acid sequence, 1457 residues long: Eye-specific diacylglycerol kinase (1457 aa).

3 disordered regions span residues 1–123 (MQQQ…SSEA), 136–177 (RSHS…PPCI), and 207–339 (YSNT…QPTT). Composition is skewed to low complexity over residues 22-62 (SATT…LRTT), 98-115 (SQRA…SSAS), and 141-154 (DSAT…DSGT). Residues 214–253 (ASEDEDEVEGHNAEEEEEGSAAIEDAEEETTEAATEEADE) are compositionally biased toward acidic residues. The span at 254 to 266 (DPRTEVESEHDHD) shows a compositional bias: basic and acidic residues. Residues 294–303 (RLPRQMRRHT) show a composition bias toward basic residues. 2 consecutive Phorbol-ester/DAG-type zinc fingers follow at residues 591 to 641 (HYWK…TLAC) and 661 to 724 (HHWV…GEEC). The interval 758–799 (NNAASGSGGGGAGGGAGGGGGKSKKQTQRRQKGKEEKKEPRA) is disordered. Over residues 763-778 (GSGGGGAGGGAGGGGG) the composition is skewed to gly residues. Over residues 779-789 (KSKKQTQRRQK) the composition is skewed to basic residues. The region spanning 808–944 (PEVIPVIVFI…MDRWRVKVTP (137 aa)) is the DAGKc domain. A disordered region spans residues 1264-1302 (TPDQERSFAAFSQRQAQNERRQMDQAQGRGPGSTDEDLQ). ANK repeat units follow at residues 1320–1349 (QTSD…SLQS), 1353–1382 (NGQT…RRLI), 1389–1418 (LGQT…HLDT), and 1422–1451 (GGNT…TQPV).

The protein belongs to the eukaryotic diacylglycerol kinase family. As to expression, expressed specifically in adult eye.

The protein localises to the membrane. It carries out the reaction a 1,2-diacyl-sn-glycerol + ATP = a 1,2-diacyl-sn-glycero-3-phosphate + ADP + H(+). Its function is as follows. Required for the maintenance of phospholipid turnover within the photoreceptor. In Drosophila melanogaster (Fruit fly), this protein is Eye-specific diacylglycerol kinase (rdgA).